The chain runs to 503 residues: MHTHNNFKTPSDADELDDLDDDMVIGVIEEIAQEALVGEDVSDSDIDEHDLADVGAPEHNQNADENESISSDSSFDPNAEDSSDSDDSMLEEDEAEGASSGEATSAKRRKDDNDGPCGSAADSAAVDLDDLDDETDETVRAIIAAIKKPRSAPPEIKLEDFITDVCFHPDRDIIALATIIGDVHLYEYGNEGNKLLRTIEVHSKACRDVEFTEDGRYLLTASKDKCVMVTDLETEKLKKLYETAHDDAINKLHVLDENLFATGDDAGTVKLWDLRTKNPIFELKEVEDQITQMITNDQKKLLLATSADGYLTTFNIAARKLYVQSEPYEEELNCMGIYRGSSKLVVGTSKGKLYSYNWGYFGYHCDMYPGIKSPVSLMIPITDRIACVAGEDGNIRACHITPYRNLGVVGQHNMPIESLDINTSGELLASSSHNNDVRFWNVKYFEDFGDIKYNDKHNAYKEKRHNLPSSKCTNASDFFSDLTKEDEDNADNNDAAAGPSNSA.

Disordered regions lie at residues 1–21 and 35–132; these read MHTH…DLDD and ALVG…DDLD. 3 stretches are compositionally biased toward acidic residues: residues 12–21, 40–50, and 78–96; these read DADELDDLDD, DVSDSDIDEHD, and NAED…DEAE. 6 WD repeats span residues 157 to 196, 201 to 242, 244 to 282, 285 to 324, 327 to 366, and 411 to 450; these read KLED…NKLL, VHSK…KLYE, AHDD…PIFE, EVED…LYVQ, PYEE…YHCD, and QHNM…DFGD. The interval 483–503 is disordered; sequence TKEDEDNADNNDAAAGPSNSA.

It belongs to the WD repeat WDR55 family.

This Drosophila persimilis (Fruit fly) protein is WD repeat-containing protein 55 homolog.